We begin with the raw amino-acid sequence, 411 residues long: Putative competence-damage inducible protein (411 aa).

This sequence belongs to the CinA family.

This Caldicellulosiruptor saccharolyticus (strain ATCC 43494 / DSM 8903 / Tp8T 6331) protein is Putative competence-damage inducible protein.